Reading from the N-terminus, the 501-residue chain is Probable cytosol aminopeptidase (501 aa).

Residues K267 and D272 each coordinate Mn(2+). The active site involves K279. D290, D349, and E351 together coordinate Mn(2+). R353 is a catalytic residue.

Belongs to the peptidase M17 family. Requires Mn(2+) as cofactor.

It localises to the cytoplasm. It catalyses the reaction Release of an N-terminal amino acid, Xaa-|-Yaa-, in which Xaa is preferably Leu, but may be other amino acids including Pro although not Arg or Lys, and Yaa may be Pro. Amino acid amides and methyl esters are also readily hydrolyzed, but rates on arylamides are exceedingly low.. The catalysed reaction is Release of an N-terminal amino acid, preferentially leucine, but not glutamic or aspartic acids.. Functionally, presumably involved in the processing and regular turnover of intracellular proteins. Catalyzes the removal of unsubstituted N-terminal amino acids from various peptides. The polypeptide is Probable cytosol aminopeptidase (Hamiltonella defensa subsp. Acyrthosiphon pisum (strain 5AT)).